The sequence spans 379 residues: UPF0754 membrane protein ABC1518 (379 aa).

2 helical membrane-spanning segments follow: residues 1–21 (MHWIWLVLLLAVVGAIVGAAT) and 358–378 (LLGGLIGGIVGLIQAVIVHFF).

This sequence belongs to the UPF0754 family.

The protein localises to the cell membrane. This chain is UPF0754 membrane protein ABC1518, found in Shouchella clausii (strain KSM-K16) (Alkalihalobacillus clausii).